The sequence spans 237 residues: Putative N-acetylmannosamine-6-phosphate 2-epimerase (237 aa).

This sequence belongs to the NanE family.

It carries out the reaction an N-acyl-D-glucosamine 6-phosphate = an N-acyl-D-mannosamine 6-phosphate. It participates in amino-sugar metabolism; N-acetylneuraminate degradation; D-fructose 6-phosphate from N-acetylneuraminate: step 3/5. In terms of biological role, converts N-acetylmannosamine-6-phosphate (ManNAc-6-P) to N-acetylglucosamine-6-phosphate (GlcNAc-6-P). The polypeptide is Putative N-acetylmannosamine-6-phosphate 2-epimerase (Listeria monocytogenes serovar 1/2a (strain ATCC BAA-679 / EGD-e)).